Here is a 253-residue protein sequence, read N- to C-terminus: MQKLIMGNWKMNGNSTSIKELCSGISQVQYDTSRVAIAVFPSSVYVKEVISQLPEKVGVGLQNITFYDDGAYTGEISARMLEDIGCDYLLIGHSERRSLFAESDEDVFKKLNKIIDTTITPVVCIGESLDDRKSGKLKQVLATQLSLILENLSVEQLAKVVIAYEPVWAIGTGVVASLEQIQETHQFIRSLLAKVDERLAKNIKIVYGGSLKAENAKDILSLPDVDGGLIGGASLKAAEFNEIINQANKICTE.

Asparagine 8–lysine 10 serves as a coordination point for substrate. Residue histidine 93 is the Electrophile of the active site. Catalysis depends on glutamate 165, which acts as the Proton acceptor. Residues glycine 171, serine 210, and glycine 231–glycine 232 each bind substrate.

Belongs to the triosephosphate isomerase family. Homodimer.

It localises to the cytoplasm. The enzyme catalyses D-glyceraldehyde 3-phosphate = dihydroxyacetone phosphate. Its pathway is carbohydrate biosynthesis; gluconeogenesis. The protein operates within carbohydrate degradation; glycolysis; D-glyceraldehyde 3-phosphate from glycerone phosphate: step 1/1. In terms of biological role, involved in the gluconeogenesis. Catalyzes stereospecifically the conversion of dihydroxyacetone phosphate (DHAP) to D-glyceraldehyde-3-phosphate (G3P). This chain is Triosephosphate isomerase, found in Francisella tularensis subsp. holarctica (strain FTNF002-00 / FTA).